The chain runs to 306 residues: Prophage bactoprenol glucosyl transferase homolog (306 aa).

At 1-227 (MKISLVVPVF…ITSFSTFPLR (227 aa)) the chain is on the cytoplasmic side. Residues 228–248 (IWTYIGLVVASVAFIYGAWMI) form a helical membrane-spanning segment. At 249–262 (LDTIIFGNAVRGYP) the chain is on the periplasmic side. A helical membrane pass occupies residues 263-283 (SLLVSILFLGGIQMIGIGVLG). Topologically, residues 284-306 (EYIGRTYIETKKRPKYIIKRVKK) are cytoplasmic.

Belongs to the glycosyltransferase 2 family. GtrB subfamily.

The protein resides in the cell inner membrane. In terms of biological role, involved in O antigen modification. Catalyzes the transfer of the glucose residue from UDP-glucose to a lipid carrier. In Escherichia coli (strain K12), this protein is Prophage bactoprenol glucosyl transferase homolog (yfdH).